Reading from the N-terminus, the 6684-residue chain is Replicase polyprotein 1ab (6684 aa).

Residues serine 2–glycine 108 enclose the CoV Nsp1 globular domain. In terms of domain architecture, CoV Nsp2 N-terminal spans alanine 111–arginine 349. 4 residues coordinate Zn(2+): cysteine 240, cysteine 242, cysteine 259, and cysteine 260. The tract at residues cysteine 240–cysteine 260 is C4. In terms of domain architecture, CoV Nsp2 middle spans asparagine 378–isoleucine 773. The region spanning arginine 768–glycine 879 is the CoV Nsp2 C-terminal domain. One can recognise a Ubiquitin-like 1 domain in the interval lysine 882–isoleucine 983. The tract at residues glutamate 989–valine 1032 is disordered. Positions serine 997–glutamate 1015 are enriched in acidic residues. Residues proline 1055–proline 1299 enclose the Peptidase C16 1 domain. Residue cysteine 1093 is the For PL1-PRO activity of the active site. The segment at cysteine 1164 to cysteine 1195 adopts a C4-type 1; degenerate zinc-finger fold. Active-site for PL1-PRO activity residues include histidine 1244 and aspartate 1257. The Macro domain occupies asparagine 1318–isoleucine 1489. Residues serine 1486–lysine 1542 form the Ubiquitin-like 2 domain. In terms of domain architecture, Peptidase C16 2 spans alanine 1550–glutamine 1803. Cysteine 1588 functions as the For PL2-PRO activity in the catalytic mechanism. 4 residues coordinate Zn(2+): cysteine 1667, cysteine 1670, cysteine 1694, and histidine 1696. The C4-type 2; atypical zinc-finger motif lies at cysteine 1667–histidine 1696. Catalysis depends on for PL2-PRO activity residues histidine 1741 and aspartate 1754. The chain crosses the membrane as a helical span at residues leucine 1896–valine 1916. The HD1 stretch occupies residues leucine 1896–cysteine 2053. The 3Ecto domain maps to asparagine 1905 to aspartate 1970. Intrachain disulfides connect cysteine 1921–cysteine 1948 and cysteine 1939–cysteine 1945. 2 consecutive transmembrane segments (helical) span residues cysteine 1995–valine 2015 and phenylalanine 2033–cysteine 2053. Residues leucine 2044–aspartate 2134 form a Y1 region. The region spanning leucine 2044–serine 2384 is the CoV Nsp3 Y domain. Zn(2+) is bound by residues histidine 2048, cysteine 2053, cysteine 2058, cysteine 2061, cysteine 2094, histidine 2097, cysteine 2101, and cysteine 2104. A ZF1 region spans residues histidine 2048–cysteine 2061. The interval cysteine 2094–cysteine 2104 is ZF2. A Y2 region spans residues arginine 2135 to leucine 2224. Residues arginine 2135 to serine 2384 form a coV-Y region. Positions serine 2225 to glycine 2281 are Y3. Residues isoleucine 2282–serine 2384 are Y4. Transmembrane regions (helical) follow at residues isoleucine 2401 to alanine 2421, tyrosine 2467 to leucine 2487, proline 2497 to valine 2517, cysteine 2538 to alanine 2558, glycine 2666 to leucine 2686, cysteine 2695 to valine 2715, phenylalanine 2721 to isoleucine 2741, and phenylalanine 2746 to phenylalanine 2766. Residues isoleucine 2401–phenylalanine 2766 form an HD2 region. The Nsp4C domain occupies leucine 2783–glutamine 2878. Positions serine 2879 to glutamine 3180 constitute a Peptidase C30 domain. Residues histidine 2919 and cysteine 3022 each act as for 3CL-PRO activity in the active site. Helical transmembrane passes span phenylalanine 3187–methionine 3207, threonine 3217–isoleucine 3237, leucine 3242–tryptophan 3262, methionine 3280–valine 3300, tryptophan 3313–threonine 3333, phenylalanine 3347–alanine 3367, isoleucine 3371–methionine 3391, and isoleucine 3394–tryptophan 3414. An HD3 region spans residues phenylalanine 3187–tryptophan 3414. Positions serine 3475–glutamine 3557 constitute a RdRp Nsp7 cofactor domain. The RdRp Nsp8 cofactor domain maps to serine 3558–glutamine 3752. One can recognise a Nsp9 ssRNA-binding domain in the interval asparagine 3753–glutamine 3863. The ExoN/MTase coactivator domain maps to alanine 3864–glutamine 4004. Residues cysteine 3937, cysteine 3940, histidine 3946, cysteine 3953, cysteine 3979, cysteine 3982, cysteine 3990, and cysteine 3992 each coordinate Zn(2+). 2 zinc fingers span residues cysteine 3937–cysteine 3953 and cysteine 3979–cysteine 3992. A NiRAN domain is found at tyrosine 4006–isoleucine 4255. Positions lysine 4261–methionine 4359 constitute a Nsp12 Interface domain. Zn(2+) is bound by residues histidine 4290, cysteine 4296, cysteine 4301, cysteine 4305, and cysteine 4482. The Nsp12 RNA-dependent RNA polymerase domain occupies lysine 4360–glutamine 4927. Residues serine 4362–alanine 4576 form a rdRp Fingers N-ter region. Residues threonine 4577–proline 4615 form a rdRp Palm N-ter region. The RdRp catalytic domain maps to glycine 4607–glycine 4769. A rdRp Fingers C-ter region spans residues lysine 4616–glycine 4674. Zn(2+) is bound by residues histidine 4637, cysteine 4640, and cysteine 4641. Residues threonine 4675–glutamine 4810 form a rdRp Palm C-ter region. Residues serine 4754, aspartate 4755, and aspartate 4756 contribute to the active site. The tract at residues histidine 4811–glutamine 4927 is rdRp Thumb. Positions alanine 4928–aspartate 5040 constitute a CV ZBD domain. Positions 4932, 4935, 4943, 4946, 4953, 4956, 4960, 4966, 4977, 4982, 4999, and 5002 each coordinate Zn(2+). In terms of domain architecture, (+)RNA virus helicase ATP-binding spans asparagine 5175 to leucine 5366. ATP is bound at residue glycine 5210–serine 5217. A (+)RNA virus helicase C-terminal domain is found at histidine 5367–lysine 5536. The ExoN domain maps to leucine 5598 to valine 5812. Active-site residues include aspartate 5616, glutamate 5618, and glutamate 5717. Zn(2+) is bound by residues cysteine 5733, cysteine 5735, cysteine 5751, histidine 5754, histidine 5782, cysteine 5786, and histidine 5789. Active-site residues include histidine 5793 and aspartate 5798. Cysteine 5804 provides a ligand contact to Zn(2+). One can recognise an N7-MTase domain in the interval tyrosine 5821–lysine 6042. Aspartate 5856 to glycine 5862 contacts S-adenosyl-L-methionine. The gpppA-binding stretch occupies residues cysteine 5933–threonine 5947. Zn(2+) is bound by residues cysteine 5971, cysteine 5988, cysteine 5999, and histidine 6002. The Nsp15 N-terminal oligomerization domain occupies serine 6046 to arginine 6106. Residues lysine 6107–valine 6224 enclose the AV-Nsp11N/CoV-Nsp15M domain. One can recognise a NendoU domain in the interval lysine 6241–proline 6381. Active-site residues include histidine 6271, histidine 6286, lysine 6327, lysine 6429, aspartate 6513, lysine 6553, and glutamate 6586. Positions serine 6385–valine 6681 constitute a Nidovirus-type SAM-dependent 2'-O-MTase domain.

It belongs to the coronaviruses polyprotein 1ab family. As to quaternary structure, 3CL-PRO exists as monomer and homodimer. Eight copies of nsp7 and eight copies of nsp8 assemble to form a heterohexadecamer. Nsp9 is a dimer. Nsp10 forms a dodecamer. Mn(2+) is required as a cofactor. Specific enzymatic cleavages in vivo by its own proteases yield mature proteins. 3CL-PRO is autocatalytically processed.

It localises to the host membrane. The protein localises to the host cytoplasm. It is found in the host perinuclear region. The protein resides in the host endoplasmic reticulum-Golgi intermediate compartment. It carries out the reaction Thiol-dependent hydrolysis of ester, thioester, amide, peptide and isopeptide bonds formed by the C-terminal Gly of ubiquitin (a 76-residue protein attached to proteins as an intracellular targeting signal).. The enzyme catalyses RNA(n) + a ribonucleoside 5'-triphosphate = RNA(n+1) + diphosphate. It catalyses the reaction ATP + H2O = ADP + phosphate + H(+). The catalysed reaction is a 5'-end diphospho-ribonucleoside in mRNA + GTP + H(+) = a 5'-end (5'-triphosphoguanosine)-ribonucleoside in mRNA + diphosphate. It carries out the reaction a 5'-end (N(7)-methyl 5'-triphosphoguanosine)-ribonucleoside in mRNA + S-adenosyl-L-methionine = a 5'-end (N(7)-methyl 5'-triphosphoguanosine)-(2'-O-methyl-ribonucleoside) in mRNA + S-adenosyl-L-homocysteine + H(+). The enzyme catalyses uridylyl-uridylyl-ribonucleotide-RNA = a 3'-end uridylyl-2',3'-cyclophospho-uridine-RNA + a 5'-end dephospho-ribonucleoside-RNA. In terms of biological role, the replicase polyprotein of coronaviruses is a multifunctional protein: it contains the activities necessary for the transcription of negative stranded RNA, leader RNA, subgenomic mRNAs and progeny virion RNA as well as proteinases responsible for the cleavage of the polyprotein into functional products. Its function is as follows. Non-structural protein 1 inhibits host translation. By suppressing host gene expression, nsp1 facilitates efficient viral gene expression in infected cells and evasion from host immune response. Functionally, the papain-like proteinase 1 (PLP1) and papain-like proteinase 2 (PLP2) are responsible for the cleavages located at the N-terminus of the replicase polyprotein. In addition, PLP2 possesses a deubiquitinating/deISGylating activity and processes both 'Lys-48'- and 'Lys-63'-linked polyubiquitin chains from cellular substrates. PLP2 also antagonizes innate immune induction of type I interferon by blocking the nuclear translocation of host IRF-3. Responsible for the majority of cleavages as it cleaves the C-terminus of replicase polyprotein at 11 sites. Recognizes substrates containing the core sequence [ILMVF]-Q-|-[SAGC]. Inhibited by the substrate-analog Cbz-Val-Asn-Ser-Thr-Leu-Gln-CMK. In terms of biological role, the helicase which contains a zinc finger structure displays RNA and DNA duplex-unwinding activities with 5' to 3' polarity. ATPase activity is strongly stimulated by poly(U), poly(dT), poly(C), poly(dA), but not by poly(G). Its function is as follows. The exoribonuclease acts on both ssRNA and dsRNA in a 3' to 5' direction. Functionally, nsp7-nsp8 hexadecamer may possibly confer processivity to the polymerase, maybe by binding to dsRNA or by producing primers utilized by the latter. Forms a primer, NSP9-pU, which is utilized by the polymerase for the initiation of RNA chains. Interacts with ribosome signal recognition particle RNA (SRP). Together with NSP8, suppress protein integration into the cell membrane, thereby disrupting host immune defenses. In terms of biological role, RNA-directed RNA polymerase that catalyzes the transcription of viral genomic and subgenomic RNAs. Acts in complex with nsp7 and nsp8 to transcribe both the minus and positive strands of genomic RNA. The kinase-like NiRAN domain of NSP12 attaches one or more nucleotides to the amino terminus of NSP9, forming a covalent RNA-protein intermediate that serves as transcription/replication primer. Subgenomic RNAs (sgRNAs) are formed by discontinuous transcription: The polymerase has the ability to pause at transcription-regulating sequences (TRS) and jump to the leader TRS, resulting in a major deletion. This creates a series of subgenomic RNAs that are replicated, transcribed and translated. In addition, Nsp12 is a subunit of the viral RNA capping enzyme that catalyzes the RNA guanylyltransferase reaction for genomic and sub-genomic RNAs. Subsequently, the NiRAN domain transfers RNA to GDP, and forms the core cap structure GpppA-RNA. Its function is as follows. Plays a role in viral transcription/replication and prevents the simultaneous activation of host cell dsRNA sensors, such as MDA5/IFIH1, OAS, and PKR. Acts by degrading the 5'-polyuridines generated during replication of the poly(A) region of viral genomic and subgenomic RNAs. Catalyzes a two-step reaction in which a 2'3'-cyclic phosphate (2'3'-cP) is first generated by 2'-O transesterification, which is then hydrolyzed to a 3'-phosphate (3'-P). If not degraded, poly(U) RNA would hybridize with poly(A) RNA tails and activate host dsRNA sensors. The sequence is that of Replicase polyprotein 1ab (rep) from Sus scrofa (Pig).